Consider the following 153-residue polypeptide: 6,7-dimethyl-8-ribityllumazine synthase (153 aa).

5-amino-6-(D-ribitylamino)uracil is bound by residues phenylalanine 22, 56 to 58 (AFE), and 80 to 82 (AVI). 85-86 (AT) serves as a coordination point for (2S)-2-hydroxy-3-oxobutyl phosphate. Histidine 88 acts as the Proton donor in catalysis. Phenylalanine 113 contributes to the 5-amino-6-(D-ribitylamino)uracil binding site. A (2S)-2-hydroxy-3-oxobutyl phosphate-binding site is contributed by arginine 127.

Belongs to the DMRL synthase family.

The enzyme catalyses (2S)-2-hydroxy-3-oxobutyl phosphate + 5-amino-6-(D-ribitylamino)uracil = 6,7-dimethyl-8-(1-D-ribityl)lumazine + phosphate + 2 H2O + H(+). It participates in cofactor biosynthesis; riboflavin biosynthesis; riboflavin from 2-hydroxy-3-oxobutyl phosphate and 5-amino-6-(D-ribitylamino)uracil: step 1/2. Functionally, catalyzes the formation of 6,7-dimethyl-8-ribityllumazine by condensation of 5-amino-6-(D-ribitylamino)uracil with 3,4-dihydroxy-2-butanone 4-phosphate. This is the penultimate step in the biosynthesis of riboflavin. This chain is 6,7-dimethyl-8-ribityllumazine synthase, found in Clostridium tetani (strain Massachusetts / E88).